A 115-amino-acid polypeptide reads, in one-letter code: NADH-ubiquinone oxidoreductase chain 3 (115 aa).

Helical transmembrane passes span 3–23, 55–75, and 84–104; these read LMITLLTNFTLATLLVTIAFW, FFLVAITFLLFDLEIALLLPL, and LNTMLTMALLLIFLLAVSLAY.

The protein belongs to the complex I subunit 3 family. Core subunit of respiratory chain NADH dehydrogenase (Complex I) which is composed of 45 different subunits. Interacts with TMEM186. Interacts with TMEM242.

It localises to the mitochondrion inner membrane. The catalysed reaction is a ubiquinone + NADH + 5 H(+)(in) = a ubiquinol + NAD(+) + 4 H(+)(out). Its function is as follows. Core subunit of the mitochondrial membrane respiratory chain NADH dehydrogenase (Complex I) which catalyzes electron transfer from NADH through the respiratory chain, using ubiquinone as an electron acceptor. Essential for the catalytic activity of complex I. This is NADH-ubiquinone oxidoreductase chain 3 from Ovis aries (Sheep).